Reading from the N-terminus, the 311-residue chain is Bifunctional protein FolD (311 aa).

174–176 (GKG) contributes to the NADP(+) binding site.

Belongs to the tetrahydrofolate dehydrogenase/cyclohydrolase family. Homodimer.

The catalysed reaction is (6R)-5,10-methylene-5,6,7,8-tetrahydrofolate + NADP(+) = (6R)-5,10-methenyltetrahydrofolate + NADPH. It carries out the reaction (6R)-5,10-methenyltetrahydrofolate + H2O = (6R)-10-formyltetrahydrofolate + H(+). It functions in the pathway one-carbon metabolism; tetrahydrofolate interconversion. Its function is as follows. Catalyzes the oxidation of 5,10-methylenetetrahydrofolate to 5,10-methenyltetrahydrofolate and then the hydrolysis of 5,10-methenyltetrahydrofolate to 10-formyltetrahydrofolate. The protein is Bifunctional protein FolD of Pyrobaculum arsenaticum (strain DSM 13514 / JCM 11321 / PZ6).